Reading from the N-terminus, the 258-residue chain is NAD-capped RNA hydrolase NudC (258 aa).

Arg69 contributes to the substrate binding site. Zn(2+) is bound by residues Cys98 and Cys101. Substrate is bound at residue Glu111. Residues Cys116 and Cys119 each contribute to the Zn(2+) site. Position 124 (Tyr124) interacts with substrate. Positions 125 to 248 (PQIAPCIIVA…TVARRLIEDT (124 aa)) constitute a Nudix hydrolase domain. Positions 158, 174, and 178 each coordinate a divalent metal cation. The Nudix box signature appears at 159-180 (GFVEVGETLEQTVAREVMEESG). 192-199 (QPWPFPMS) provides a ligand contact to substrate. Glu219 contacts a divalent metal cation. Ala241 serves as a coordination point for substrate.

It belongs to the Nudix hydrolase family. NudC subfamily. Homodimer. The cofactor is Mg(2+). Mn(2+) serves as cofactor. Zn(2+) is required as a cofactor.

The catalysed reaction is a 5'-end NAD(+)-phospho-ribonucleoside in mRNA + H2O = a 5'-end phospho-adenosine-phospho-ribonucleoside in mRNA + beta-nicotinamide D-ribonucleotide + 2 H(+). The enzyme catalyses NAD(+) + H2O = beta-nicotinamide D-ribonucleotide + AMP + 2 H(+). It carries out the reaction NADH + H2O = reduced beta-nicotinamide D-ribonucleotide + AMP + 2 H(+). In terms of biological role, mRNA decapping enzyme that specifically removes the nicotinamide adenine dinucleotide (NAD) cap from a subset of mRNAs by hydrolyzing the diphosphate linkage to produce nicotinamide mononucleotide (NMN) and 5' monophosphate mRNA. The NAD-cap is present at the 5'-end of some mRNAs and stabilizes RNA against 5'-processing. Has preference for mRNAs with a 5'-end purine. Catalyzes the hydrolysis of a broad range of dinucleotide pyrophosphates. The polypeptide is NAD-capped RNA hydrolase NudC (Enterobacter sp. (strain 638)).